An 873-amino-acid polypeptide reads, in one-letter code: Kinase suppressor of Ras 1 (873 aa).

Disordered regions lie at residues methionine 1 to alanine 24, glutamate 174 to serine 230, and leucine 251 to lysine 281. The tract at residues methionine 1 to glycine 170 is mediates association with membranes. Over residues alanine 206–valine 216 the composition is skewed to polar residues. Phosphothreonine occurs at positions 256 and 260. Serine 297 carries the post-translational modification Phosphoserine; by MARK3. Residue serine 320 is modified to Phosphoserine. Residues threonine 333–cysteine 377 form a Phorbol-ester/DAG-type zinc finger. Histidine 334 contacts Zn(2+). Serine 337 carries the post-translational modification Phosphoserine. The Zn(2+) site is built by cysteine 346, cysteine 349, cysteine 359, cysteine 362, histidine 367, cysteine 370, and cysteine 377. The residue at position 392 (serine 392) is a Phosphoserine; by MARK3. Threonine 411 carries the post-translational modification Phosphothreonine. 2 disordered regions span residues leucine 416–phenylalanine 473 and histidine 506–arginine 544. Low complexity predominate over residues serine 429–threonine 458. Positions histidine 506–glutamate 519 are enriched in basic and acidic residues. Serine 518 is subject to Phosphoserine. Residues alanine 520–aspartate 530 are compositionally biased toward acidic residues. The Protein kinase domain occupies valine 563–leucine 833. An ATP-binding site is contributed by isoleucine 569 to valine 577. The Proton acceptor role is filled by aspartate 683. ATP contacts are provided by lysine 685 and aspartate 700. The residue at position 838 (serine 838) is a Phosphoserine.

The protein belongs to the protein kinase superfamily. TKL Ser/Thr protein kinase family. Homodimer. Heterodimerizes (via N-terminus) with BRAF (via N-terminus) in a MAP2K1/MEK1 or MAP2K2/MEK2-dependent manner. Interacts with MAP2K1/MEK1 and MAP2K2/MEK2. Binding to MAP2K1/MEK1 releases the intramolecular inhibitory interaction between KSR1 N-terminus and kinase domains which is required for the subsequent RSK1 dimerization with BRAF. Identified in a complex with AKAP13, MAP2K1 and BRAF. Interacts with AKAP13 and BRAF. Interacts with RAF and MAPK/ERK, in a Ras-dependent manner. Interacts with 14-3-3 proteins including YWHAB. Interacts with HSP90AA1/HSP90, YWHAE/14-3-3 and CDC37. The binding of 14-3-3 proteins to phosphorylated KSR1 prevents the membrane localization. Interacts with MARK3/C-TAK1. Interacts with PPP2R1A and PPP2CA. Interacts with VRK2. Post-translationally, phosphorylated on Ser-297 and, to a higher extent, on Ser-392 by MARK3. Dephosphorylated on Ser-392 by PPP2CA. Phosphorylated KSR1 is cytoplasmic and dephosphorylated KSR1 is membrane-associated. Phosphorylated by PKA at Ser-838. Phosphorylation at Ser-838 is required for cAMP-dependent activation of MAPK1 and/or MAPK3. As to expression, expressed in brain, spleen and testis. Isoform 1 is highly expressed spleen and weakly in testis, and isoform 2 is highly expressed in brain and weakly in testis.

It is found in the cytoplasm. The protein resides in the membrane. Its subcellular location is the cell membrane. It localises to the cell projection. The protein localises to the ruffle membrane. It is found in the endoplasmic reticulum membrane. The catalysed reaction is L-seryl-[protein] + ATP = O-phospho-L-seryl-[protein] + ADP + H(+). It catalyses the reaction L-threonyl-[protein] + ATP = O-phospho-L-threonyl-[protein] + ADP + H(+). Functionally, part of a multiprotein signaling complex which promotes phosphorylation of Raf family members and activation of downstream MAP kinases. Independently of its kinase activity, acts as MAP2K1/MEK1 and MAP2K2/MEK2-dependent allosteric activator of BRAF; upon binding to MAP2K1/MEK1 or MAP2K2/MEK2, dimerizes with BRAF and promotes BRAF-mediated phosphorylation of MAP2K1/MEK1 and/or MAP2K2/MEK2. Promotes activation of MAPK1 and/or MAPK3, both in response to EGF and to cAMP. Its kinase activity is unsure. Some protein kinase activity has been detected in vitro, however the physiological relevance of this activity is unknown. The protein is Kinase suppressor of Ras 1 (Ksr1) of Mus musculus (Mouse).